The sequence spans 748 residues: Long-chain-alcohol oxidase FAO4B (748 aa).

The span at 1-18 shows a compositional bias: basic residues; sequence MEDVRRRNRGHPLLRSKK. Residues 1–25 form a disordered region; sequence MEDVRRRNRGHPLLRSKKRGEGYNH. 2 helical membrane-spanning segments follow: residues 89 to 109 and 140 to 160; these read IILMILSFRFGTLLLCGSLCL and FLLPFRITFFLAKFYTLFYFF. 238–253 is an FAD binding site; the sequence is CDAVVVGSGSGGGVAA. The Proton acceptor role is filled by His-679.

The protein belongs to the GMC oxidoreductase family.

The protein localises to the membrane. The catalysed reaction is a long-chain primary fatty alcohol + O2 = a long-chain fatty aldehyde + H2O2. Long-chain fatty alcohol oxidase involved in the omega-oxidation pathway of lipid degradation. The polypeptide is Long-chain-alcohol oxidase FAO4B (FAO4B) (Arabidopsis thaliana (Mouse-ear cress)).